The primary structure comprises 538 residues: Putative ABC1 protein At2g40090 (538 aa).

A signal peptide spans 1 to 26 (MAARSLWRTRTKLLVVGTALCGGSGA).

It belongs to the protein kinase superfamily. ADCK protein kinase family.

In Arabidopsis thaliana (Mouse-ear cress), this protein is Putative ABC1 protein At2g40090.